A 58-amino-acid chain; its full sequence is UPF0391 membrane protein Plav_0056 (58 aa).

A run of 2 helical transmembrane segments spans residues Trp-4–Val-24 and Ile-30–Val-50.

It belongs to the UPF0391 family.

It localises to the cell membrane. This is UPF0391 membrane protein Plav_0056 from Parvibaculum lavamentivorans (strain DS-1 / DSM 13023 / NCIMB 13966).